A 1044-amino-acid polypeptide reads, in one-letter code: Translation initiation factor IF-2 (1044 aa).

The tract at residues 31 to 425 is disordered; it reads VRSASSTVEP…RKSKRAKRQE (395 aa). Composition is skewed to pro residues over residues 77-98 and 106-116; these read GPAP…PQPA and APAPAPAPRPA. A compositionally biased stretch (low complexity) spans 117–148; it reads EPAANPAPAAPPAFQAPAPAPAERPAAAQRPA. Over residues 168 to 185 the composition is skewed to gly residues; the sequence is GGPGQGPRPGARPGGPGA. Residues 204-247 show a composition bias toward basic and acidic residues; that stretch reads GPGDRPERSERPDRGDRPQGDRPRSDRPQGERQQGDRPQGDRPG. Positions 285–304 are enriched in low complexity; sequence GGAPRPGNNPFASNQGMPRP. Positions 305 to 328 are enriched in pro residues; it reads QGGPRPTPAGPGGPRPGGPRPNPG. Positions 329 to 338 are enriched in low complexity; the sequence is MMPARPTVGR. A compositionally biased stretch (gly residues) spans 339–409; it reads PGAGPGAGRP…GTQGAFGRAG (71 aa). Residues 413 to 422 are compositionally biased toward basic residues; it reads VRGRKSKRAK. Positions 537-709 constitute a tr-type G domain; it reads ARPPVVTVMG…VLLTADASLD (173 aa). A G1 region spans residues 546–553; sequence GHVDHGKT. 546 to 553 contacts GTP; it reads GHVDHGKT. The G2 stretch occupies residues 571–575; the sequence is GITQH. A G3 region spans residues 596 to 599; it reads DTPG. Residues 596–600 and 650–653 contribute to the GTP site; these read DTPGH and NKVD. The G4 stretch occupies residues 650–653; that stretch reads NKVD. Residues 686–688 are G5; that stretch reads SAR.

It belongs to the TRAFAC class translation factor GTPase superfamily. Classic translation factor GTPase family. IF-2 subfamily.

It localises to the cytoplasm. Functionally, one of the essential components for the initiation of protein synthesis. Protects formylmethionyl-tRNA from spontaneous hydrolysis and promotes its binding to the 30S ribosomal subunits. Also involved in the hydrolysis of GTP during the formation of the 70S ribosomal complex. The sequence is that of Translation initiation factor IF-2 from Kineococcus radiotolerans (strain ATCC BAA-149 / DSM 14245 / SRS30216).